The chain runs to 271 residues: Magnesium dechelatase SGR2, chloroplastic (271 aa).

The transit peptide at 1-54 (MCSLATNLLLPSKMKPVFPEKLSTSSLCVTTRRSKMKNRSIVPVARLFGPAIFE) directs the protein to the chloroplast.

This sequence belongs to the staygreen family. In terms of assembly, interacts with the light harvesting complex II (LHCII). Interacts with the chlorophyll catabolic enzyme (CCE) RCCR.

It localises to the plastid. It is found in the chloroplast thylakoid membrane. The catalysed reaction is chlorophyll a + 2 H(+) = pheophytin a + Mg(2+). Magnesium chelatase involved in chlorophyll a degradation in the chlorophyll-protein complexes of photosystem I (PSI) and photosystem II (PSII). Contributes to the degradation of PSI and PSII in the thylakoid membranes. Required to trigger chlorophyll degradation during natural and dark-induced leaf senescence. Mediates chlorophyll degradation during embryo degreening. Recombinant SGR2 possesses high dechelating activity against chlorophyll a, very low activity against chlorophyllide a, and no activity against chlorophyll b. This Arabidopsis thaliana (Mouse-ear cress) protein is Magnesium dechelatase SGR2, chloroplastic.